The sequence spans 285 residues: Probable xyloglucan endotransglucosylase/hydrolase protein 12 (285 aa).

The first 25 residues, 1–25, serve as a signal peptide directing secretion; the sequence is MAAFATKQSPLLLASLLILIGVATG. Residues 26–215 form the GH16 domain; it reads SFYDSFDITW…WTNAPFSASY (190 aa). Glutamate 101 serves as the catalytic Nucleophile. The active-site Proton donor is glutamate 105. Residue glutamate 105 participates in xyloglucan binding. N-linked (GlcNAc...) asparagine glycosylation occurs at asparagine 109. Residues 118–120, 128–130, 194–195, and glycine 199 each bind xyloglucan; these read HTN, NRE, and DW. 2 disulfide bridges follow: cysteine 224-cysteine 235 and cysteine 268-cysteine 282. Arginine 273 lines the xyloglucan pocket.

This sequence belongs to the glycosyl hydrolase 16 family. XTH group 2 subfamily. Post-translationally, contains at least one intrachain disulfide bond essential for its enzymatic activity. Root specific.

Its subcellular location is the secreted. The protein resides in the cell wall. It localises to the extracellular space. It is found in the apoplast. It carries out the reaction breaks a beta-(1-&gt;4) bond in the backbone of a xyloglucan and transfers the xyloglucanyl segment on to O-4 of the non-reducing terminal glucose residue of an acceptor, which can be a xyloglucan or an oligosaccharide of xyloglucan.. Functionally, catalyzes xyloglucan endohydrolysis (XEH) and/or endotransglycosylation (XET). Cleaves and religates xyloglucan polymers, an essential constituent of the primary cell wall, and thereby participates in cell wall construction of growing tissues. In Arabidopsis thaliana (Mouse-ear cress), this protein is Probable xyloglucan endotransglucosylase/hydrolase protein 12 (XTH12).